Consider the following 393-residue polypeptide: Chorismate synthase (393 aa).

NADP(+) contacts are provided by R40 and R46. Residues 129–131 (RSS), 249–250 (QA), G301, 316–320 (KPIPT), and R342 each bind FMN.

Belongs to the chorismate synthase family. Homotetramer. It depends on FMNH2 as a cofactor.

The catalysed reaction is 5-O-(1-carboxyvinyl)-3-phosphoshikimate = chorismate + phosphate. It functions in the pathway metabolic intermediate biosynthesis; chorismate biosynthesis; chorismate from D-erythrose 4-phosphate and phosphoenolpyruvate: step 7/7. In terms of biological role, catalyzes the anti-1,4-elimination of the C-3 phosphate and the C-6 proR hydrogen from 5-enolpyruvylshikimate-3-phosphate (EPSP) to yield chorismate, which is the branch point compound that serves as the starting substrate for the three terminal pathways of aromatic amino acid biosynthesis. This reaction introduces a second double bond into the aromatic ring system. The chain is Chorismate synthase from Pelobacter propionicus (strain DSM 2379 / NBRC 103807 / OttBd1).